A 162-amino-acid chain; its full sequence is NADH-quinone oxidoreductase subunit I (162 aa).

4Fe-4S ferredoxin-type domains lie at 53-83 (QRRYANGEERCIACKLCEAVCPAMAISIESE) and 93-122 (SRYDIDLTKCIFCGFCEEACPVDAIVETHI). [4Fe-4S] cluster contacts are provided by Cys63, Cys66, Cys69, Cys73, Cys102, Cys105, Cys108, and Cys112.

The protein belongs to the complex I 23 kDa subunit family. NDH-1 is composed of 14 different subunits. Subunits NuoA, H, J, K, L, M, N constitute the membrane sector of the complex. [4Fe-4S] cluster serves as cofactor.

The protein localises to the cell inner membrane. The catalysed reaction is a quinone + NADH + 5 H(+)(in) = a quinol + NAD(+) + 4 H(+)(out). NDH-1 shuttles electrons from NADH, via FMN and iron-sulfur (Fe-S) centers, to quinones in the respiratory chain. The immediate electron acceptor for the enzyme in this species is believed to be ubiquinone. Couples the redox reaction to proton translocation (for every two electrons transferred, four hydrogen ions are translocated across the cytoplasmic membrane), and thus conserves the redox energy in a proton gradient. In Chromobacterium violaceum (strain ATCC 12472 / DSM 30191 / JCM 1249 / CCUG 213 / NBRC 12614 / NCIMB 9131 / NCTC 9757 / MK), this protein is NADH-quinone oxidoreductase subunit I.